The primary structure comprises 417 residues: Type II methyltransferase M.Eco47II (417 aa).

The region spanning 81 to 414 (YTVLELFAGA…KSVVHLLDKI (334 aa)) is the SAM-dependent MTase C5-type domain. The active site involves C153.

This sequence belongs to the class I-like SAM-binding methyltransferase superfamily. C5-methyltransferase family.

It carries out the reaction a 2'-deoxycytidine in DNA + S-adenosyl-L-methionine = a 5-methyl-2'-deoxycytidine in DNA + S-adenosyl-L-homocysteine + H(+). Its function is as follows. A methylase that recognizes the double-stranded sequence 5'-GGNCC-3', methylates C-? on both strands, and protects the DNA from cleavage by both the Eco47I and Eco47II endonucleases. The polypeptide is Type II methyltransferase M.Eco47II (Escherichia coli).